Reading from the N-terminus, the 216-residue chain is Uracil phosphoribosyltransferase (216 aa).

30–34 (KTLVR) provides a ligand contact to GTP. Residues arginine 80, arginine 105, and 140 to 148 (DPMIATAST) contribute to the 5-phospho-alpha-D-ribose 1-diphosphate site. Uracil contacts are provided by residues isoleucine 203 and 208–210 (GDA). Aspartate 209 is a binding site for 5-phospho-alpha-D-ribose 1-diphosphate.

It belongs to the UPRTase family. Mg(2+) serves as cofactor.

It carries out the reaction UMP + diphosphate = 5-phospho-alpha-D-ribose 1-diphosphate + uracil. The protein operates within pyrimidine metabolism; UMP biosynthesis via salvage pathway; UMP from uracil: step 1/1. With respect to regulation, allosterically activated by GTP. Catalyzes the conversion of uracil and 5-phospho-alpha-D-ribose 1-diphosphate (PRPP) to UMP and diphosphate. This is Uracil phosphoribosyltransferase from Sulfurisphaera tokodaii (strain DSM 16993 / JCM 10545 / NBRC 100140 / 7) (Sulfolobus tokodaii).